A 275-amino-acid polypeptide reads, in one-letter code: T cell receptor alpha chain MC.7.G5 (275 aa).

The N-terminal stretch at 1 to 21 is a signal peptide; sequence MACPGFLWALVISTCLEFSMA. An Ig-like V-type domain is found at 22–116; the sequence is QTVTQSQPEM…AAMYFCAYRS (95 aa). The interval 22-116 is t cell receptor alpha variable 38-2DV8; the sequence is QTVTQSQPEM…AAMYFCAYRS (95 aa). A disulfide bridge connects residues Cys43 and Cys112. Residues 47–53 are CDR1; that stretch reads TSESDYY. Positions 71-81 are CDR2; the sequence is QEAYKQQNATE. Asn78 carries N-linked (GlcNAc...) asparagine glycosylation. The tract at residues 112 to 124 is CDR3; sequence CAYRSAVNARLMF. Residues 119–134 are t cell receptor alpha joining 31; it reads NARLMFGDGTQLVVKP. The t cell receptor alpha constant stretch occupies residues 136–275; that stretch reads IQNPDPAVYQ…LLMTLRLWSS (140 aa). The region spanning 154-242 is the Ig-like C1-type domain; sequence KSVCLFTDFD…LVEKSFETDT (89 aa). Cys157 and Cys207 are disulfide-bonded. Residues Asn167, Asn201, Asn212, and Asn248 are each glycosylated (N-linked (GlcNAc...) asparagine). The tract at residues 229–250 is connecting peptide; that stretch reads CDVKLVEKSFETDTNLNFQNLS. The helical transmembrane segment at 251–273 threads the bilayer; that stretch reads VIGFRILLLKVAGFNLLMTLRLW. Residues 274 to 275 lie on the Cytoplasmic side of the membrane; it reads SS.

As to quaternary structure, disulfide-linked heterodimer with TRBV25-1*01J2S3*01C2*01 beta chain. The alpha-beta TR associates with the transmembrane signaling CD3 coreceptor proteins to form the TR-CD3 (TCR). The assembly of alpha-beta TR heterodimers with CD3 occurs in the endoplasmic reticulum where a single alpha-beta TR heterodimer associates with one CD3D-CD3E heterodimer, one CD3G-CD3E heterodimer and one CD247 homodimer forming a stable octameric structure. CD3D-CD3E and CD3G-CD3E heterodimers preferentially associate with TR alpha and TR beta chains (via TM domain), respectively. The association of the CD247 homodimer is the last step of TCR assembly in the endoplasmic reticulum and is required for transport to the cell surface. In terms of tissue distribution, expressed in MR1-restricted CD8-positive T cells.

Its subcellular location is the cell membrane. In terms of biological role, the alpha chain of TRAV38-2DV8*01J31*01C*01/TRBV25-1*01J2S3*01C2*01 alpha-beta T cell receptor (TR) clonotype that displays pan-cancer cell recognition via the invariant MR1 molecule. On CD8-positive T cell clone MC.7.G5, likely recognizes tumor-specific or -associated metabolite(s) essential for cancer cell survival, triggering killing of many cancer cell types including lung, melanoma, leukemia, colon, breast, prostate, bone and ovarian cancer cells. Mediates cancer cell cytotoxicity in an HLA-independent manner. Has no reactivity to healthy cells, even stressed or infected by bacteria. Antigen recognition initiates TR-CD3 clustering on the cell surface and intracellular activation of LCK that phosphorylates the ITAM motifs of CD3G, CD3D, CD3E and CD247 enabling the recruitment of ZAP70. In turn, ZAP70 phosphorylates LAT, which recruits numerous signaling molecules to form the LAT signalosome. The LAT signalosome propagates signal branching to three major signaling pathways, the calcium, the mitogen-activated protein kinase (MAPK) kinase and the nuclear factor NF-kappa-B (NF-kB) pathways, leading to the mobilization of transcription factors that are critical for gene expression and essential for T cell differentiation into effector/memory T cells. The chain is T cell receptor alpha chain MC.7.G5 from Homo sapiens (Human).